Reading from the N-terminus, the 77-residue chain is uncharacterized protein (77 aa).

It localises to the plastid. Its subcellular location is the cyanelle. This is an uncharacterized protein from Cyanophora paradoxa.